A 544-amino-acid chain; its full sequence is Inward rectifier potassium channel irk-1 (544 aa).

Residues M1–W109 are Cytoplasmic-facing. The chain crosses the membrane as a helical span at residues R110–I134. Over A135–S158 the chain is Extracellular. The segment at residues V159–H170 is an intramembrane region (helical; Pore-forming). The segment at residues H171–H177 is an intramembrane region (pore-forming). Residues T172 to H177 carry the Selectivity filter motif. Topologically, residues R178–L186 are extracellular. The chain crosses the membrane as a helical span at residues A187–I208. Topologically, residues V209 to T544 are cytoplasmic. 2 disordered regions span residues H411–V448 and L512–V533. The segment covering N438–V448 has biased composition (polar residues).

Belongs to the inward rectifier-type potassium channel (TC 1.A.2.1) family. In terms of tissue distribution, expressed in neurons in the head and tail with no expression detected in non-neuronal cells in these regions. Also detected in the egg-laying system of adult hermaphordites with strong expression in the HSN motor neurons and weak expression in vulval muscles.

It localises to the membrane. Its subcellular location is the perikaryon. The protein localises to the cell projection. Its function is as follows. Inward rectifier potassium channels are characterized by a greater tendency to allow potassium to flow into the cell rather than out of it. Required for modulation of the activity of the hermaphrodite-specific neurons (HSNs) by the G-protein coupled neuropeptide receptor egl-6 which in turn controls egg-laying behavior. The sequence is that of Inward rectifier potassium channel irk-1 (irk-1) from Caenorhabditis elegans.